The primary structure comprises 148 residues: Angiogenin-1 (148 aa).

An N-terminal signal peptide occupies residues 1-23 (MVMVLSPLLLVFILGLGLTPVAP). Histidine 37 functions as the Proton acceptor in the catalytic mechanism. Arginine 45 is a binding site for tRNA. 3 disulfides stabilise this stretch: cysteine 50-cysteine 105, cysteine 63-cysteine 116, and cysteine 81-cysteine 131. Positions 55-59 (KNRRL) match the Nucleolar localization signal motif. TRNA-binding residues include cysteine 105 and isoleucine 127. The active-site Proton donor is the histidine 138.

The protein belongs to the pancreatic ribonuclease family. Homodimer. Interacts with RNH1; inhibiting ANG ribonuclease activity. In terms of tissue distribution, serum and milk.

It is found in the secreted. Its subcellular location is the nucleus. It localises to the nucleolus. The protein localises to the cytoplasm. The protein resides in the stress granule. Its function is as follows. Secreted ribonuclease that can either promote or restrict cell proliferation of target cells, depending on the context. Endocytosed in target cells via its receptor PLXNB2 and translocates to the cytoplasm or nucleus. Under stress conditions, localizes to the cytoplasm and promotes the assembly of stress granules (SGs): specifically cleaves a subset of tRNAs within anticodon loops to produce tRNA-derived stress-induced fragments (tiRNAs), resulting in translation repression and inhibition of cell proliferation. tiRNas also prevent formation of apoptosome, thereby promoting cell survival. Preferentially cleaves RNAs between a pyrimidine and an adenosine residue, suggesting that it cleaves the anticodon loop of tRNA(Ala) (32-UUAGCAU-38) after positions 33 and 36. Cleaves a subset of tRNAs, including tRNA(Ala), tRNA(Glu), tRNA(Gly), tRNA(Lys), tRNA(Val), tRNA(His), tRNA(Asp) and tRNA(Sec). Under growth conditions and in differentiated cells, translocates to the nucleus and stimulates ribosomal RNA (rRNA) transcription, including that containing the initiation site sequences of 45S rRNA, thereby promoting cell growth and proliferation. Angiogenin induces vascularization of normal and malignant tissues via its ability to promote rRNA transcription. The chain is Angiogenin-1 (ANG1) from Bos taurus (Bovine).